Here is a 223-residue protein sequence, read N- to C-terminus: Neurotrophic factor BDNF precursor form (223 aa).

A signal peptide spans 1-5 (SCMKA). Residues 6-114 (APMKEVSLRG…AANMSMRVRR (109 aa)) constitute a propeptide that is removed on maturation. N-linked (GlcNAc...) asparagine glycosylation occurs at asparagine 107. Intrachain disulfides connect cysteine 127-cysteine 194 and cysteine 172-cysteine 223.

This sequence belongs to the NGF-beta family.

The protein localises to the secreted. Its function is as follows. Promotes the survival of neuronal populations that are all located either in the central nervous system or directly connected to it. The polypeptide is Neurotrophic factor BDNF precursor form (BDNF) (Ramphotyphlops sp. (strain YPM 13663) (Blind snake)).